A 120-amino-acid chain; its full sequence is Phosphoribosyl-AMP cyclohydrolase (120 aa).

D75 serves as a coordination point for Mg(2+). Position 76 (C76) interacts with Zn(2+). The Mg(2+) site is built by D77 and D79. Zn(2+) is bound by residues C92 and C99.

It belongs to the PRA-CH family. Homodimer. The cofactor is Mg(2+). Zn(2+) is required as a cofactor.

It localises to the cytoplasm. It carries out the reaction 1-(5-phospho-beta-D-ribosyl)-5'-AMP + H2O = 1-(5-phospho-beta-D-ribosyl)-5-[(5-phospho-beta-D-ribosylamino)methylideneamino]imidazole-4-carboxamide. It functions in the pathway amino-acid biosynthesis; L-histidine biosynthesis; L-histidine from 5-phospho-alpha-D-ribose 1-diphosphate: step 3/9. Its function is as follows. Catalyzes the hydrolysis of the adenine ring of phosphoribosyl-AMP. This Methanosarcina mazei (strain ATCC BAA-159 / DSM 3647 / Goe1 / Go1 / JCM 11833 / OCM 88) (Methanosarcina frisia) protein is Phosphoribosyl-AMP cyclohydrolase.